Here is a 499-residue protein sequence, read N- to C-terminus: Na(+)/H(+) antiporter NhaB (499 aa).

Transmembrane regions (helical) follow at residues 38–58 (VSPF…LAMA), 62–82 (YPLQ…LTSA), 89–109 (VLAN…IYFM), 128–148 (LLLS…LDAL), 149–169 (TVTA…HRFA), 204–224 (LIMH…VGEP), 242–262 (LVMA…CAIL), 310–330 (VLVF…LLII), 349–369 (FEEA…VAVI), 393–413 (MFFV…VATV), 449–469 (ATPN…APLI), and 478–498 (IMAL…VILF).

The protein belongs to the NhaB Na(+)/H(+) (TC 2.A.34) antiporter family.

It localises to the cell inner membrane. The catalysed reaction is 2 Na(+)(in) + 3 H(+)(out) = 2 Na(+)(out) + 3 H(+)(in). Na(+)/H(+) antiporter that extrudes sodium in exchange for external protons. The chain is Na(+)/H(+) antiporter NhaB from Saccharophagus degradans (strain 2-40 / ATCC 43961 / DSM 17024).